The sequence spans 248 residues: MTTMSRRYTPNIIITGTPGCGKSSHSSSLVSQLNQTLGKETTIHFKHFNISEIAKERDCIESYDAKLDTSIVDEDKLLDSLEPDLEKGGVVVDWHCCDIFPERLIDLVVVLRTDNSNLFDRLKTRNYNDLKLQENLDCEIMEVILQEAKDSYIPDIVIELRSDTAEEMDENVDRISSWVETWIEDHPDGVSNELNKQYNPDDSSDEGDDNSDSDEYELEEDEQEEEEEREEYDEETNEEMEHTEDIAQ.

ATP is bound by residues Gly-19, Gly-21, Lys-22, Ser-23, and Ser-24. The tract at residues 49-72 (NISEIAKERDCIESYDAKLDTSIV) is NMPbind. Residues 124–134 (TRNYNDLKLQE) form an LID region. An ATP-binding site is contributed by Arg-125. The disordered stretch occupies residues 188 to 248 (DGVSNELNKQ…EMEHTEDIAQ (61 aa)). The segment covering 202–238 (DSSDEGDDNSDSDEYELEEDEQEEEEEREEYDEETNE) has biased composition (acidic residues). Residues 239–248 (EMEHTEDIAQ) are compositionally biased toward basic and acidic residues.

The protein belongs to the adenylate kinase family. AK6 subfamily. As to quaternary structure, interacts with small ribosomal subunit protein uS11. Not a structural component of 43S pre-ribosomes, but transiently interacts with them by binding to uS11.

The protein localises to the cytoplasm. It localises to the nucleus. It catalyses the reaction AMP + ATP = 2 ADP. The catalysed reaction is ATP + H2O = ADP + phosphate + H(+). Broad-specificity nucleoside monophosphate (NMP) kinase that catalyzes the reversible transfer of the terminal phosphate group between nucleoside triphosphates and monophosphates. Also has ATPase activity. Involved in the late cytoplasmic maturation steps of the 40S ribosomal particles, specifically 18S rRNA maturation. While NMP activity is not required for ribosome maturation, ATPase activity is. Associates transiently with small ribosomal subunit protein uS11. ATP hydrolysis breaks the interaction with uS11. May temporarily remove uS11 from the ribosome to enable a conformational change of the ribosomal RNA that is needed for the final maturation step of the small ribosomal subunit. Its NMP activity may have a role in nuclear energy homeostasis. Induces transcription of mating-type proteins ALPHA1 and ALPHA2 and moderately represses transcription of mating-type protein A1 in response to hemoglobin and growth signals. Involved in the induction of a high affinity fibronectin receptor by sub-inhibitory dosages of caspofungin. The chain is Adenylate kinase isoenzyme 6 homolog HBR1 (HBR1) from Candida albicans (strain SC5314 / ATCC MYA-2876) (Yeast).